The sequence spans 317 residues: MAQNNEQQQQGQGLIEAGVLDDIINRLLEFRNARTVRQVQLSEAEIRSLCSASREIFLQQPNLLDLKPPIKICGDIHGQYGDLLRLFEYGGFPPEANYLFLGDYVDRGKQSLETICLLLAYKIKYPENFFLLRGNHECASINRIYGFYDECKRRFNVKLWKCFTECFNCLPVAALIDEKILCMHGGLSPVLTNLDQIRNLPRPTDVPDSGLLCDLLWSDPSREVKGWGMNDRGVSYTFGPDKVAEFLMQHDMDLVCRAHQVVEDGYEFFAERQLVTIFSAPNYCGEFDNAGAMMSVDESLMCSFQILKPTDRKPRFL.

D75, H77, D103, and N135 together coordinate Mn(2+). The active-site Proton donor is the H136. 2 residues coordinate Mn(2+): H184 and H259.

This sequence belongs to the PPP phosphatase family. PP-1 subfamily. The cofactor is Mn(2+).

The catalysed reaction is O-phospho-L-seryl-[protein] + H2O = L-seryl-[protein] + phosphate. The enzyme catalyses O-phospho-L-threonyl-[protein] + H2O = L-threonyl-[protein] + phosphate. The sequence is that of Serine/threonine-protein phosphatase PP1 isozyme 1 (NPP1) from Nicotiana tabacum (Common tobacco).